The following is a 145-amino-acid chain: Basic phospholipase A2 beta-bungarotoxin A2 chain (145 aa).

The first 17 residues, 1–17, serve as a signal peptide directing secretion; the sequence is MLIFLWCGAVCVSLLGA. Positions 18-25 are excised as a propeptide; sequence ANIPPHPL. 6 disulfides stabilise this stretch: Cys-52–Cys-144, Cys-54–Cys-70, Cys-69–Cys-125, Cys-76–Cys-118, Cys-86–Cys-111, and Cys-104–Cys-116. Ca(2+) is bound by residues Tyr-53, Gly-55, and Gly-57. The active site involves His-73. Asp-74 is a Ca(2+) binding site. Asp-119 is a catalytic residue.

Belongs to the phospholipase A2 family. Group I subfamily. D49 sub-subfamily. As to quaternary structure, heterodimer; disulfide-linked. The A chains have phospholipase A2 activity and the B chains show homology with the basic protease inhibitors. The A2 chain is found in beta-3 and beta-4 bungarotoxins. The cofactor is Ca(2+). In terms of tissue distribution, expressed by the venom gland.

It is found in the secreted. The enzyme catalyses a 1,2-diacyl-sn-glycero-3-phosphocholine + H2O = a 1-acyl-sn-glycero-3-phosphocholine + a fatty acid + H(+). Its function is as follows. Snake venom phospholipase A2 (PLA2) that inhibits neuromuscular transmission by blocking acetylcholine release from the nerve termini. PLA2 catalyzes the calcium-dependent hydrolysis of the 2-acyl groups in 3-sn-phosphoglycerides. The sequence is that of Basic phospholipase A2 beta-bungarotoxin A2 chain from Bungarus multicinctus (Many-banded krait).